Consider the following 169-residue polypeptide: Photosystem I assembly protein Ycf3 (169 aa).

TPR repeat units lie at residues 36–69, 73–106, and 121–154; these read AFTYYRDGMSAQSEGNYAEALQNYYEAMRLEIDP, SYILYNIGLIHTRNGEHTKALEYYFRALERNPFL, and GEQAIRQGDSEIAEAWFNQAAEYWKQAIALTPGN.

This sequence belongs to the Ycf3 family.

The protein resides in the plastid. The protein localises to the chloroplast thylakoid membrane. Its function is as follows. Essential for the assembly of the photosystem I (PSI) complex. May act as a chaperone-like factor to guide the assembly of the PSI subunits. This is Photosystem I assembly protein Ycf3 from Cucumis sativus (Cucumber).